A 183-amino-acid polypeptide reads, in one-letter code: uncharacterized protein (183 aa).

3 disordered regions span residues 1–44 (MPFY…VMTA), 68–137 (GRAG…LGLR), and 163–183 (RDDPRESEVRPVTGVQTVWPE).

This is an uncharacterized protein from Dryophytes versicolor (chameleon treefrog).